The sequence spans 211 residues: MDSKEYLISYGWKEGEAFREGGLKRPILVKHKRDKKGLGNAPGGNDGEAWWERLFDGHLKNLDVSTDSNNGSIKFTQNEAVATAVSKSSSPLYRWFVKGEGLKGTITNLGKKEEASFVVSSASSSKGKKRRRRDEDDNKVKRKKLKKDKKTSNDSESKKKKKKKSKKESKKGKKSKHSSDEGDKSKHKKSKKSKKHKKEESSARRDRKEHI.

A disordered region spans residues 115 to 211 (ASFVVSSASS…SARRDRKEHI (97 aa)). Over residues 116–125 (SFVVSSASSS) the composition is skewed to low complexity. Basic residues-rich tracts occupy residues 140–149 (VKRKKLKKDK), 158–176 (KKKKKKKSKKESKKGKKSK), and 185–197 (SKHKKSKKSKKHK). The span at 198–211 (KEESSARRDRKEHI) shows a compositional bias: basic and acidic residues.

As to quaternary structure, forms homooligomers. Associates with ribosomal complexes.

It is found in the nucleus. Its subcellular location is the nucleolus. In terms of biological role, trans-acting factors of the ribosome biogenesis process. The sequence is that of Protein TMA23 (TMA23) from Saccharomyces cerevisiae (strain ATCC 204508 / S288c) (Baker's yeast).